A 208-amino-acid polypeptide reads, in one-letter code: Imidazoleglycerol-phosphate dehydratase (208 aa).

Residues Met1–Ala22 form a disordered region. Positions Val7–Gly19 are enriched in low complexity.

Belongs to the imidazoleglycerol-phosphate dehydratase family.

The protein localises to the cytoplasm. The enzyme catalyses D-erythro-1-(imidazol-4-yl)glycerol 3-phosphate = 3-(imidazol-4-yl)-2-oxopropyl phosphate + H2O. Its pathway is amino-acid biosynthesis; L-histidine biosynthesis; L-histidine from 5-phospho-alpha-D-ribose 1-diphosphate: step 6/9. The chain is Imidazoleglycerol-phosphate dehydratase from Anaeromyxobacter dehalogenans (strain 2CP-C).